We begin with the raw amino-acid sequence, 94 residues long: CRISPR-associated endoribonuclease Cas2 (94 aa).

This sequence belongs to the CRISPR-associated endoribonuclease Cas2 protein family. E.coli-subtype subfamily. In terms of assembly, homodimer. Part of the Cas1-Cas2 complex. Forms a hexamer with 2 Cas1 dimers sandwiching a Cas2 dimer. The DNA lies across a flat surface extending from 1 Cas1 dimer, across the Cas2 dimer and contacting the other Cas1 dimer. Only 1 Cas1 protein from each dimer is catalytic, the other interacts with the Cas2 dimer and possibly target DNA.

CRISPR (clustered regularly interspaced short palindromic repeat), is an adaptive immune system that provides protection against mobile genetic elements (viruses, transposable elements and conjugative plasmids). CRISPR clusters contain sequences complementary to antecedent mobile elements and target invading nucleic acids. CRISPR clusters are transcribed and processed into CRISPR RNA (crRNA). The Cas1-Cas2 complex is involved in CRISPR adaptation, the first stage of CRISPR immunity, being required for the addition/removal of CRISPR spacers at the leader end of the CRISPR locus. The Cas1-Cas2 complex introduces staggered nicks into both strands of the CRISPR array near the leader repeat and joins the 5'-ends of the repeat strands with the 3'-ends of the new spacer sequence. Spacer DNA integration requires supercoiled target DNA and 3'-OH ends on the inserted (spacer) DNA and probably initiates with a nucleophilic attack of the C 3'-OH end of the protospacer on the minus strand of the first repeat sequence. Expression of Cas1-Cas2 in a strain lacking both genes permits spacer acquisition. Cas2 not seen to bind DNA alone; the Cas1-Cas2 complex preferentially binds CRISPR-locus DNA. Highest binding is seen to a dual forked DNA complex with 3'-overhangs and a protospacer-adjacent motif-complement specifically positioned. The protospacer DNA lies across a flat surface extending from 1 Cas1 dimer, across the Cas2 dimer and contacting the other Cas1 dimer; the 23 bp-long ds section of the DNA is bracketed by 1 Tyr-22 from each of the Cas1 dimers. Cas1 cuts within the 3'-overhang, to generate a 33-nucleotide DNA that is probably incorporated into the CRISPR leader by a cut-and-paste mechanism. This subunit's probable nuclease activity is not required for spacer acquisition. This is CRISPR-associated endoribonuclease Cas2 (ygbF) from Escherichia coli (strain K12).